The sequence spans 616 residues: Probable beta-hexosaminidase ARB_01353 (616 aa).

The first 20 residues, 1 to 20, serve as a signal peptide directing secretion; sequence MRFAKALAITAVLLSGVVEA. Residues 96 to 117 form a disordered region; that stretch reads KFDPFPDQSSKPKEKRQNAPPG. N-linked (GlcNAc...) asparagine glycosylation occurs at Asn-333. Glu-361 serves as the catalytic Proton donor.

The protein belongs to the glycosyl hydrolase 20 family.

Its subcellular location is the secreted. It carries out the reaction Hydrolysis of terminal non-reducing N-acetyl-D-hexosamine residues in N-acetyl-beta-D-hexosaminides.. Functionally, beta-hexosaminidase that shows a broad substrate specificity. In Arthroderma benhamiae (strain ATCC MYA-4681 / CBS 112371) (Trichophyton mentagrophytes), this protein is Probable beta-hexosaminidase ARB_01353.